Consider the following 251-residue polypeptide: Hydroxyacylglutathione hydrolase (251 aa).

Residues His-53, His-55, Asp-57, His-58, His-110, Asp-127, and His-165 each contribute to the Zn(2+) site.

It belongs to the metallo-beta-lactamase superfamily. Glyoxalase II family. As to quaternary structure, monomer. Zn(2+) is required as a cofactor.

It carries out the reaction an S-(2-hydroxyacyl)glutathione + H2O = a 2-hydroxy carboxylate + glutathione + H(+). The protein operates within secondary metabolite metabolism; methylglyoxal degradation; (R)-lactate from methylglyoxal: step 2/2. In terms of biological role, thiolesterase that catalyzes the hydrolysis of S-D-lactoyl-glutathione to form glutathione and D-lactic acid. The polypeptide is Hydroxyacylglutathione hydrolase (Yersinia pestis).